The following is a 363-amino-acid chain: GTPase Obg (363 aa).

In terms of domain architecture, Obg spans 1-159 (MKFIDEAKIY…LELRLELRVL (159 aa)). The OBG-type G domain maps to 160 to 338 (ADVGLLGLPN…LIYAISEALE (179 aa)). GTP-binding positions include 166–173 (GLPNAGKS), 191–195 (FTTLH), 213–216 (DVPG), 284–287 (NKLD), and 319–321 (AAI). 2 residues coordinate Mg(2+): serine 173 and threonine 193. A disordered region spans residues 342–363 (RPEIGDLDDNDEDSDEIIRDTE). Acidic residues predominate over residues 346-356 (GDLDDNDEDSD).

Belongs to the TRAFAC class OBG-HflX-like GTPase superfamily. OBG GTPase family. In terms of assembly, monomer. Mg(2+) is required as a cofactor.

It is found in the cytoplasm. An essential GTPase which binds GTP, GDP and possibly (p)ppGpp with moderate affinity, with high nucleotide exchange rates and a fairly low GTP hydrolysis rate. Plays a role in control of the cell cycle, stress response, ribosome biogenesis and in those bacteria that undergo differentiation, in morphogenesis control. This chain is GTPase Obg, found in Dechloromonas aromatica (strain RCB).